The primary structure comprises 420 residues: Glycogen synthase kinase-3 beta (420 aa).

Residues 1–22 (MSGRPRTTSFAESCKPVQQPSA) show a composition bias toward polar residues. A disordered region spans residues 1–53 (MSGRPRTTSFAESCKPVQQPSAFGSMKVSRDKDGSKVTTVVATPGQGPDRPQE). Ser9 carries the phosphoserine; by PKB/AKT1, RPS6KA3 and SGK3 modification. Cys14 is lipidated: S-palmitoyl cysteine. The 285-residue stretch at 56-340 (YTDTKVIGNG…PLEACAHSFF (285 aa)) folds into the Protein kinase domain. Residues 62–70 (IGNGSFGVV) and Lys85 each bind ATP. The active-site Proton acceptor is Asp181. Tyr216 bears the Phosphotyrosine mark. Residues 385–420 (QAAASPPANATAASDTNAGDRGQTNNAASASASNST) form a disordered region. Composition is skewed to low complexity over residues 386 to 401 (AAAS…SDTN) and 409 to 420 (NNAASASASNST). Ser389 is modified (phosphoserine).

This sequence belongs to the protein kinase superfamily. CMGC Ser/Thr protein kinase family. GSK-3 subfamily. In terms of assembly, monomer. Interacts with DAB2IP (via C2 domain); the interaction stimulates GSK3B kinase activation. Interacts (via C2 domain) with PPP2CA. Interacts with ARRB2, AXIN1, CABYR, DISC1, MMP2, MUC1, NIN, PRUNE1 and ZBED3. Interacts with AXIN1; the interaction mediates hyperphosphorylation of CTNNB1 leading to its ubiquitination and destruction. Interacts with and phosphorylates SNAI1. Interacts with DNM1L (via a C-terminal domain). Found in a complex composed of MACF1, APC, AXIN1, CTNNB1 and GSK3B. Interacts with SGK3. Interacts with the CLOCK-BMAL1 heterodimer. Interacts with the BMAL1. Interacts with CTNND2. The complex composed, at least, of APC, CTNNB1 and GSK3B interacts with JPT1; the interaction requires the inactive form of GSK3B (phosphorylated at 'Ser-9'). Forms a complex composed of PRKAR2A or PRKAR2B, GSK3B and GSKIP through GSKIP interaction; facilitates PKA-induced phosphorylation and regulates GSK3B activity. Interacts with GSKIP. Interacts with GID8. Interacts with PIWIL2. Interacts with LMBR1L. Interacts with DDX3X. Interacts with BIRC2. Interacts with TNFRSF10B; TNFRSF10B stimulation inhibits GSK3B kinase activity. Found in a complex with SLC39A6, SLC39A10 and with GSK3B that controls NCAM1 phosphorylation. Interacts with PKP3 (via ARM repeats); the interaction may be involved in PKP3 protein degradation. In terms of processing, phosphorylated by AKT1 and ILK1. Upon insulin-mediated signaling, the activated PKB/AKT1 and RPS6KA3 protein kinases phosphorylate and deactivate GSK3B, resulting in the dephosphorylation and activation of GYS1. Activated by phosphorylation at Tyr-216. Inactivated by phosphorylation at Ser-9. Phosphorylated in a circadian manner in the hippocampus. Post-translationally, mono-ADP-ribosylation by PARP10 negatively regulates kinase activity. Palmitoylated. Palmitoylation by ZDHHC4 prevents AKT1-mediated phosphorylation.

Its subcellular location is the cytoplasm. It localises to the nucleus. The protein resides in the membrane. The protein localises to the cell membrane. It carries out the reaction L-seryl-[tau protein] + ATP = O-phospho-L-seryl-[tau protein] + ADP + H(+). The catalysed reaction is L-threonyl-[tau protein] + ATP = O-phospho-L-threonyl-[tau protein] + ADP + H(+). The enzyme catalyses L-seryl-[protein] + ATP = O-phospho-L-seryl-[protein] + ADP + H(+). It catalyses the reaction L-threonyl-[protein] + ATP = O-phospho-L-threonyl-[protein] + ADP + H(+). Its activity is regulated as follows. Activated by phosphorylation at Tyr-216. In response to insulin, inhibited by phosphorylation at Ser-9 by PKB/AKT1; phosphorylation at this site causes a conformational change, preventing access of substrates to the active site. Inhibited by IL22 treatment which also triggers phosphorylation at Ser-9, promoting inactivation. Inhibited by lithium. Its function is as follows. Constitutively active protein kinase that acts as a negative regulator in the hormonal control of glucose homeostasis, Wnt signaling and regulation of transcription factors and microtubules, by phosphorylating and inactivating glycogen synthase (GYS1 or GYS2), EIF2B, CTNNB1/beta-catenin, APC, AXIN1, DPYSL2/CRMP2, JUN, NFATC1/NFATC, MAPT/TAU and MACF1. Requires primed phosphorylation of the majority of its substrates. In skeletal muscle, contributes to insulin regulation of glycogen synthesis by phosphorylating and inhibiting GYS1 activity and hence glycogen synthesis. May also mediate the development of insulin resistance by regulating activation of transcription factors. Regulates protein synthesis by controlling the activity of initiation factor 2B (EIF2BE/EIF2B5) in the same manner as glycogen synthase. In Wnt signaling, GSK3B forms a multimeric complex with APC, AXIN1 and CTNNB1/beta-catenin and phosphorylates the N-terminus of CTNNB1 leading to its degradation mediated by ubiquitin/proteasomes. Phosphorylates JUN at sites proximal to its DNA-binding domain, thereby reducing its affinity for DNA. Phosphorylates NFATC1/NFATC on conserved serine residues promoting NFATC1/NFATC nuclear export, shutting off NFATC1/NFATC gene regulation, and thereby opposing the action of calcineurin. Phosphorylates MAPT/TAU on 'Thr-548', decreasing significantly MAPT/TAU ability to bind and stabilize microtubules. MAPT/TAU is the principal component of neurofibrillary tangles in Alzheimer disease. Plays an important role in ERBB2-dependent stabilization of microtubules at the cell cortex. Phosphorylates MACF1, inhibiting its binding to microtubules which is critical for its role in bulge stem cell migration and skin wound repair. Probably regulates NF-kappa-B (NFKB1) at the transcriptional level and is required for the NF-kappa-B-mediated anti-apoptotic response to TNF-alpha (TNF/TNFA). Negatively regulates replication in pancreatic beta-cells, resulting in apoptosis, loss of beta-cells and diabetes. Through phosphorylation of the anti-apoptotic protein MCL1, may control cell apoptosis in response to growth factors deprivation. Phosphorylates MUC1 in breast cancer cells, decreasing the interaction of MUC1 with CTNNB1/beta-catenin. Is necessary for the establishment of neuronal polarity and axon outgrowth. Phosphorylates MARK2, leading to inhibition of its activity. Phosphorylates SIK1 at 'Thr-182', leading to sustainment of its activity. Phosphorylates ZC3HAV1 which enhances its antiviral activity. Phosphorylates SNAI1, leading to its ubiquitination and proteasomal degradation. Phosphorylates SFPQ at 'Thr-687' upon T-cell activation. Phosphorylates NR1D1 st 'Ser-55' and 'Ser-59' and stabilizes it by protecting it from proteasomal degradation. Regulates the circadian clock via phosphorylation of the major clock components including BMAL1, CLOCK and PER2. Phosphorylates CLOCK AT 'Ser-427' and targets it for proteasomal degradation. Phosphorylates BMAL1 at 'Ser-17' and 'Ser-21' and primes it for ubiquitination and proteasomal degradation. Phosphorylates FBXL2 at 'Thr-404' and primes it for ubiquitination by the SCF(FBXO3) complex and proteasomal degradation. Phosphorylates OGT at 'Ser-3' or 'Ser-4' which positively regulates its activity. Phosphorylates MYCN in neuroblastoma cells which may promote its degradation. Regulates the circadian rhythmicity of hippocampal long-term potentiation and BMAL1 and PER2 expression. Acts as a regulator of autophagy by mediating phosphorylation of KAT5/TIP60 under starvation conditions, activating KAT5/TIP60 acetyltransferase activity and promoting acetylation of key autophagy regulators, such as ULK1 and RUBCNL/Pacer. Negatively regulates extrinsic apoptotic signaling pathway via death domain receptors. Promotes the formation of an anti-apoptotic complex, made of DDX3X, BRIC2 and GSK3B, at death receptors, including TNFRSF10B. The anti-apoptotic function is most effective with weak apoptotic signals and can be overcome by stronger stimulation. Phosphorylates E2F1, promoting the interaction between E2F1 and USP11, stabilizing E2F1 and promoting its activity. Phosphorylates mTORC2 complex component RICTOR at 'Ser-1235' in response to endoplasmic stress, inhibiting mTORC2. Phosphorylates FXR1, promoting FXR1 ubiquitination by the SCF(FBXO4) complex and FXR1 degradation by the proteasome. Phosphorylates interleukin-22 receptor subunit IL22RA1, preventing its proteasomal degradation. This is Glycogen synthase kinase-3 beta from Rattus norvegicus (Rat).